The sequence spans 382 residues: RIB43A-like with coiled-coils protein 2 (382 aa).

The stretch at 222–255 (NKSQAIESVERKKQEKKQEQEDNLAEITNLLRGD) forms a coiled coil.

This sequence belongs to the RIB43A family. Microtubule inner protein component of sperm flagellar doublet microtubules. Expressed in airway epithelial cells.

It is found in the cytoplasm. Its subcellular location is the cytoskeleton. It localises to the cilium axoneme. The protein resides in the flagellum axoneme. Functionally, microtubule inner protein (MIP) part of the dynein-decorated doublet microtubules (DMTs) in cilia axoneme, which is required for motile cilia beating. The sequence is that of RIB43A-like with coiled-coils protein 2 from Homo sapiens (Human).